The primary structure comprises 1121 residues: Solute carrier family 38 member 10 (1121 aa).

Transmembrane regions (helical) follow at residues alanine 4–valine 24, isoleucine 36–valine 58, leucine 84–isoleucine 104, valine 120–leucine 140, phenylalanine 153–leucine 173, isoleucine 229–tyrosine 249, methionine 272–cysteine 292, alanine 323–glutamate 343, isoleucine 345–isoleucine 365, and valine 378–serine 398. Disordered stretches follow at residues valine 434–glycine 691, lysine 731–glycine 904, and isoleucine 965–proline 1068. 4 stretches are compositionally biased toward basic and acidic residues: residues glutamate 439–leucine 454, proline 466–glutamine 475, glutamate 493–valine 508, and aspartate 544–lysine 559. Serine 612 bears the Phosphoserine mark. Composition is skewed to basic and acidic residues over residues aspartate 645 to proline 659, glutamate 668 to glycine 679, lysine 731 to proline 752, glutamate 763 to methionine 773, serine 802 to glycine 811, and proline 863 to glutamate 876. A Phosphothreonine modification is found at threonine 772. Phosphoserine is present on serine 802. 2 positions are modified to phosphoserine: serine 890 and serine 966. The segment covering histidine 976 to valine 998 has biased composition (basic and acidic residues). Serine 999 bears the Phosphoserine mark. Basic and acidic residues-rich tracts occupy residues aspartate 1035 to lysine 1044 and aspartate 1057 to proline 1068.

The protein belongs to the amino acid/polyamine transporter 2 family.

The protein localises to the membrane. It catalyses the reaction L-glutamate(out) = L-glutamate(in). The enzyme catalyses L-glutamine(out) = L-glutamine(in). The catalysed reaction is L-alanine(in) = L-alanine(out). It carries out the reaction L-serine(in) = L-serine(out). It catalyses the reaction L-leucine(in) = L-leucine(out). Its function is as follows. Facilitates bidirectional transport of amino acids. May act as a glutamate sensor that regulates glutamate-glutamine cycle and mTOR signaling in the brain. The transport mechanism remains to be elucidated. This chain is Solute carrier family 38 member 10, found in Pongo abelii (Sumatran orangutan).